The chain runs to 184 residues: Bcl-2-modifying factor (184 aa).

The interval 67 to 75 (DKATQTLSP) is interaction with DLC2. The BH3 signature appears at 133 to 147 (IARKLQCIADQFHRL).

It belongs to the Bcl-2 family. Interacts with MCL1, BCL2, BCL2L1/BCL-Xl, BCL2A1 and BCL2L2/BCL-w. Interacts with the myosin V actin motor complex through its binding to DLC2. Isoform 1 is mainly expressed in B-lymphoid cells. Isoform 2 and isoform 3 are mainly expressed in B-CLL and normal B-cells.

Functionally, may play a role in apoptosis. Isoform 1 seems to be the main initiator. The protein is Bcl-2-modifying factor (BMF) of Homo sapiens (Human).